We begin with the raw amino-acid sequence, 257 residues long: DNA repair protein RecO (257 aa).

This sequence belongs to the RecO family.

In terms of biological role, involved in DNA repair and RecF pathway recombination. This chain is DNA repair protein RecO, found in Streptococcus thermophilus (strain ATCC BAA-491 / LMD-9).